A 247-amino-acid chain; its full sequence is E3 ubiquitin ligase TRIM40 (247 aa).

The RING-type zinc finger occupies 12–55 (CPICLDPLKEAVSTDCRHLFCRMCLIRHMDKASVSGVLSCPVCR). A B box-type zinc finger spans residues 64–105 (GDNYICHTHQKRVCRFCESSRHLLCEECLQSPEHRAHTELSI). Positions 69, 72, 91, and 97 each coordinate Zn(2+). Residues 111–148 (HYKERLNRRSRKLRKDLGDLQRLKAQEEKMLQALQVDW) are a coiled coil.

Belongs to the TRIM/RBCC family. Interacts with NEDD8.

It carries out the reaction S-ubiquitinyl-[E2 ubiquitin-conjugating enzyme]-L-cysteine + [acceptor protein]-L-lysine = [E2 ubiquitin-conjugating enzyme]-L-cysteine + N(6)-ubiquitinyl-[acceptor protein]-L-lysine.. In terms of biological role, E3 ubiquitin-protein ligase that plays a role in the limitation of the innate immune response. Mediates inhibition of the RLR signaling pathway by ubiquitinating RIGI and IFIH1 receptors, leading to their proteasomal degradation. Also promotes the neddylation of IKBKG/NEMO, stabilizing NFKBIA, and thereby inhibiting of NF-kappa-B nuclear translocation and activation. This is E3 ubiquitin ligase TRIM40 (Trim40) from Rattus norvegicus (Rat).